A 375-amino-acid polypeptide reads, in one-letter code: Alcohol dehydrogenase 1 (375 aa).

Alanine 1 is modified (N-acetylalanine). 7 residues coordinate Zn(2+): cysteine 46, histidine 68, cysteine 98, cysteine 101, cysteine 104, cysteine 112, and cysteine 175. Residues 200–205 (GLGGVG), aspartate 224, lysine 229, 293–295 (VGL), and arginine 370 each bind NAD(+).

The protein belongs to the zinc-containing alcohol dehydrogenase family. Class-I subfamily. Zn(2+) is required as a cofactor.

Its subcellular location is the cytoplasm. The catalysed reaction is a primary alcohol + NAD(+) = an aldehyde + NADH + H(+). It catalyses the reaction a secondary alcohol + NAD(+) = a ketone + NADH + H(+). This chain is Alcohol dehydrogenase 1, found in Pelophylax perezi (Perez's frog).